Consider the following 415-residue polypeptide: G patch domain-containing protein 4 (415 aa).

At M1 the chain carries N-acetylmethionine. A Phosphothreonine modification is found at T4. Residues 11 to 57 (GMKFAEEQLLKHGWTQGKGLGRRENGITQALKVTLKQDNHGVGHDPA) form the G-patch domain. K46 participates in a covalent cross-link: Glycyl lysine isopeptide (Lys-Gly) (interchain with G-Cter in SUMO2). Position 116 is a phosphothreonine (T116). Disordered regions lie at residues 116 to 141 (TSGE…TPPK) and 191 to 415 (LGTS…VDLS). Residues 118–141 (GEEKPDRDLGNCSDVDNHEPTPPK) show a composition bias toward basic and acidic residues. S130 is modified (phosphoserine). Over residues 191–201 (LGTSQPLTDSE) the composition is skewed to polar residues. Positions 224-239 (SLGDELLGHTDRSFRD) are enriched in basic and acidic residues. S258 carries the post-translational modification Phosphoserine. The segment covering 335 to 345 (EDLDTQEEEGK) has biased composition (acidic residues). Positions 353 to 364 (RKVRRKDKRKRQ) are enriched in basic residues. A compositionally biased stretch (basic and acidic residues) spans 387-397 (AGERSRQYPKE). Residues 398 to 407 (RAKKKKRKRD) show a composition bias toward basic residues.

The polypeptide is G patch domain-containing protein 4 (Gpatch4) (Mus musculus (Mouse)).